A 298-amino-acid polypeptide reads, in one-letter code: UDP-N-acetylenolpyruvoylglucosamine reductase (298 aa).

In terms of domain architecture, FAD-binding PCMH-type spans 27–206; the sequence is VGGPAQRLYR…QQQIRRLLRQ (180 aa). R171 is an active-site residue. S220 (proton donor) is an active-site residue. The active site involves E290.

The protein belongs to the MurB family. It depends on FAD as a cofactor.

The protein localises to the cytoplasm. It carries out the reaction UDP-N-acetyl-alpha-D-muramate + NADP(+) = UDP-N-acetyl-3-O-(1-carboxyvinyl)-alpha-D-glucosamine + NADPH + H(+). It participates in cell wall biogenesis; peptidoglycan biosynthesis. Its function is as follows. Cell wall formation. This is UDP-N-acetylenolpyruvoylglucosamine reductase from Nitrosococcus oceani (strain ATCC 19707 / BCRC 17464 / JCM 30415 / NCIMB 11848 / C-107).